Here is a 213-residue protein sequence, read N- to C-terminus: Ribonuclease HII (213 aa).

An RNase H type-2 domain is found at 18–213; sequence GLYAGVDEVG…RPVKERLAKN (196 aa). Residues Asp-24, Glu-25, and Asp-116 each contribute to the a divalent metal cation site.

The protein belongs to the RNase HII family. It depends on Mn(2+) as a cofactor. The cofactor is Mg(2+).

Its subcellular location is the cytoplasm. The catalysed reaction is Endonucleolytic cleavage to 5'-phosphomonoester.. Functionally, endonuclease that specifically degrades the RNA of RNA-DNA hybrids. In Shewanella sediminis (strain HAW-EB3), this protein is Ribonuclease HII.